Consider the following 264-residue polypeptide: uncharacterized protein (264 aa).

A disordered region spans residues 57 to 264 (RPPASPCPPR…VYPHPHLTAT (208 aa)). Positions 140 to 153 (GKARRSPGRRRHPH) are enriched in basic residues. The span at 154–165 (SSFPQASSPSSP) shows a compositional bias: low complexity.

This is an uncharacterized protein from Homo sapiens (Human).